The chain runs to 169 residues: Succinate dehydrogenase cytochrome b560 subunit, mitochondrial (169 aa).

The transit peptide at 1–29 directs the protein to the mitochondrion; sequence MAALLLRHVGRHCLRAHLSPQLCIRNAVP. Residues 30–62 are Mitochondrial matrix-facing; it reads LGTTAKEEMERFWSKNTTLNRPLSPHISIYGWS. The helical transmembrane segment at 63-92 threads the bilayer; the sequence is LPMAMSICHRGTGIALSAGVSLFGLSALLV. Over 93-112 the chain is Mitochondrial intermembrane; it reads PGSFESHLEFVKSLCLGPAL. The chain crosses the membrane as a helical span at residues 113–137; the sequence is IHTAKFALVFPLMYHTWNGIRHLMW. Heme b is bound at residue His-127. Over 138 to 144 the chain is Mitochondrial matrix; it reads DLGKGLT. The chain crosses the membrane as a helical span at residues 145–166; sequence ISQLHQSGVAVLVLTVLSSVGL. The Mitochondrial intermembrane segment spans residues 167 to 169; it reads AAM.

The protein belongs to the cytochrome b560 family. In terms of assembly, component of complex II composed of four subunits: the flavoprotein (FP) SDHA, iron-sulfur protein (IP) SDHB, and a cytochrome b560 composed of SDHC and SDHD. Heme b is required as a cofactor. The N-terminus is blocked.

The protein localises to the mitochondrion inner membrane. Its pathway is carbohydrate metabolism; tricarboxylic acid cycle. Functionally, membrane-anchoring subunit of succinate dehydrogenase (SDH) that is involved in complex II of the mitochondrial electron transport chain and is responsible for transferring electrons from succinate to ubiquinone (coenzyme Q). SDH also oxidizes malate to the non-canonical enol form of oxaloacetate, enol-oxaloacetate. Enol-oxaloacetate, which is a potent inhibitor of the succinate dehydrogenase activity, is further isomerized into keto-oxaloacetate. This chain is Succinate dehydrogenase cytochrome b560 subunit, mitochondrial (SDHC), found in Bos taurus (Bovine).